The chain runs to 2037 residues: Protein SWOLLEN 1 (2037 aa).

Disordered regions lie at residues 141–179 (VEPGQTSHERSLSKEETVNLQPNPSVDDTPGESSVVKTD), 454–487 (REGGVSKKSDNEGSARTSNLEQSMELPVNANDRD), 504–531 (SVGYVSGGSTSELAESESQSDSIPTDKS), 567–637 (KTSS…KDAV), 686–705 (SLPILGSEAGKDGQEEDNTA), 837–893 (VGSP…SGGK), 1011–1045 (ATPETPLQSRPGKTETPSAGHTNSKESSGTNPMIP), 1148–1197 (KHVQ…ESGP), 1729–1748 (SGETISSSHEGDTPKEKRPR), 1793–1812 (KSTREENKPDPLRMKRTGLQ), and 1841–2037 (EAST…QSKK). The span at 147–157 (SHERSLSKEET) shows a compositional bias: basic and acidic residues. Polar residues predominate over residues 158–176 (VNLQPNPSVDDTPGESSVV). The span at 454–466 (REGGVSKKSDNEG) shows a compositional bias: basic and acidic residues. Low complexity predominate over residues 504–514 (SVGYVSGGSTS). The span at 515–526 (ELAESESQSDSI) shows a compositional bias: polar residues. The segment covering 841-852 (STSSLDKTAAKS) has biased composition (low complexity). The span at 853-865 (SKAKSERKPRRTS) shows a compositional bias: basic residues. Composition is skewed to polar residues over residues 1025–1041 (ETPSAGHTNSKESSGTN) and 1151–1171 (QSGTSSNVSKVTPTLEPTSTV). Positions 1179–1189 (TRVKSRKRKKM) are enriched in basic residues. A compositionally biased stretch (basic and acidic residues) spans 1794–1805 (STREENKPDPLR). 3 stretches are compositionally biased toward polar residues: residues 1874-1886 (KTISIEKQTTISR), 1942-1964 (EEQTTSSSHDTGSKNSSSLSTNK), and 2013-2023 (LQTSMMTSKIP). The segment covering 2028-2037 (SKSHLSQSKK) has biased composition (basic residues).

Interacts with importin alpha IMPA1 and IMPA2, required for nuclear-localized proteins import. Mainly expressed in seedlings, flower buds and stems, and, to a lower extent, in leaves and siliques.

The protein localises to the nucleus. Under salt stress, appears to prevent the accumulation of reactive oxygen species (ROS) in roots and required for the maintenance of cell wall integrity (cellulose, pectin and lignin composition) by interacting with importin alpha (e.g. IMPA1 and IMPA2) and binding to the promoter of several ROS- and cell wall-related genes to regulate their expression. Necessary for cells organization in meristems and root elongation zones as well as for root elongation in high salinity, but not upon osmotic stress. This Arabidopsis thaliana (Mouse-ear cress) protein is Protein SWOLLEN 1.